The following is a 242-amino-acid chain: Protein HTATIP2 (242 aa).

Ala2 is modified (N-acetylalanine). A required for interaction with elongation factor EEF1A1 region spans residues 2–25 (AETEALSKLREDFRMQNKSVFILG). NADPH-binding residues include Ser27, Gly28, Glu29, Thr30, Arg52, Arg53, Leu92, Gly93, Tyr143, Lys147, and Arg178. Tyr143 serves as the catalytic Proton acceptor. Lys147 is an active-site residue.

Monomer. Forms homodimers during oxidative stress. Interacts (via N-terminus) with elongation factor EEF1A1 (via middle-region); the interaction is direct and competes with EEF1A1 binding to guanyl-nucleotide exchange factor EEF1B2, thereby inhibiting GDP for GTP exchange and reactivation of EEF1A1. Interacts with nuclear transport receptors XPO4, IPO5/RANBP5, IPO7, IPO9 and KPNB1 as well as GCN1L1/GCN1 and LRPPRC probably through their HEAT repeats. Binds NCOA5/CIA.

It is found in the cytoplasm. In terms of biological role, represses translation by preventing reactivation of elongation factor eEF1A. May also inhibit nuclear import by competing with nuclear import substrates for binding to a subset of nuclear transport receptors. Has additionally been proposed to act as a redox sensor involved in cellular oxidative stress surveillance. This is Protein HTATIP2 (HTATIP2) from Pan paniscus (Pygmy chimpanzee).